A 271-amino-acid chain; its full sequence is Mannosyl-3-phosphoglycerate phosphatase (271 aa).

Asp-13 acts as the Nucleophile in catalysis. Residues Asp-13, Asp-15, and Asp-214 each coordinate Mg(2+).

This sequence belongs to the HAD-like hydrolase superfamily. MPGP family. Requires Mg(2+) as cofactor.

The protein resides in the cytoplasm. It catalyses the reaction 2-O-(alpha-D-mannosyl)-3-phosphoglycerate + H2O = (2R)-2-O-(alpha-D-mannosyl)-glycerate + phosphate. In Escherichia coli O157:H7, this protein is Mannosyl-3-phosphoglycerate phosphatase (yedP).